Here is a 1375-residue protein sequence, read N- to C-terminus: DNA-directed RNA polymerase subunit beta (1375 aa).

Belongs to the RNA polymerase beta chain family. In terms of assembly, the RNAP catalytic core consists of 2 alpha, 1 beta, 1 beta' and 1 omega subunit. When a sigma factor is associated with the core the holoenzyme is formed, which can initiate transcription.

It carries out the reaction RNA(n) + a ribonucleoside 5'-triphosphate = RNA(n+1) + diphosphate. Its function is as follows. DNA-dependent RNA polymerase catalyzes the transcription of DNA into RNA using the four ribonucleoside triphosphates as substrates. The polypeptide is DNA-directed RNA polymerase subunit beta (Coxiella burnetii (strain Dugway 5J108-111)).